We begin with the raw amino-acid sequence, 429 residues long: Enolase (429 aa).

(2R)-2-phosphoglycerate is bound at residue Gln163. The active-site Proton donor is Glu205. Positions 242, 287, and 314 each coordinate Mg(2+). (2R)-2-phosphoglycerate is bound by residues Lys339, Arg368, Ser369, and Lys390. The active-site Proton acceptor is the Lys339.

The protein belongs to the enolase family. The cofactor is Mg(2+).

The protein resides in the cytoplasm. The protein localises to the secreted. It localises to the cell surface. The enzyme catalyses (2R)-2-phosphoglycerate = phosphoenolpyruvate + H2O. It functions in the pathway carbohydrate degradation; glycolysis; pyruvate from D-glyceraldehyde 3-phosphate: step 4/5. Catalyzes the reversible conversion of 2-phosphoglycerate (2-PG) into phosphoenolpyruvate (PEP). It is essential for the degradation of carbohydrates via glycolysis. The polypeptide is Enolase (Cupriavidus taiwanensis (strain DSM 17343 / BCRC 17206 / CCUG 44338 / CIP 107171 / LMG 19424 / R1) (Ralstonia taiwanensis (strain LMG 19424))).